We begin with the raw amino-acid sequence, 399 residues long: Secreted RxLR effector protein 36 (399 aa).

Positions 1–21 are cleaved as a signal peptide; that stretch reads MRGTIYVAIAILVAASSRSSA. The RxLR-dEER motif lies at 50–71; sequence RILRESRGSNDKLAVGAGDEER. Residue Asn-75 is glycosylated (N-linked (GlcNAc...) asparagine). The tract at residues 126-145 is disordered; that stretch reads IDPTPSNLGGQALHAPPNPD.

Belongs to the RxLR effector family.

It localises to the secreted. Its subcellular location is the host nucleus. In terms of biological role, secreted effector that completely suppresses the host cell death induced by cell death-inducing proteins. The protein is Secreted RxLR effector protein 36 of Plasmopara viticola (Downy mildew of grapevine).